Consider the following 180-residue polypeptide: ATP synthase subunit delta (180 aa).

It belongs to the ATPase delta chain family. F-type ATPases have 2 components, F(1) - the catalytic core - and F(0) - the membrane proton channel. F(1) has five subunits: alpha(3), beta(3), gamma(1), delta(1), epsilon(1). F(0) has three main subunits: a(1), b(2) and c(10-14). The alpha and beta chains form an alternating ring which encloses part of the gamma chain. F(1) is attached to F(0) by a central stalk formed by the gamma and epsilon chains, while a peripheral stalk is formed by the delta and b chains.

The protein localises to the cell membrane. F(1)F(0) ATP synthase produces ATP from ADP in the presence of a proton or sodium gradient. F-type ATPases consist of two structural domains, F(1) containing the extramembraneous catalytic core and F(0) containing the membrane proton channel, linked together by a central stalk and a peripheral stalk. During catalysis, ATP synthesis in the catalytic domain of F(1) is coupled via a rotary mechanism of the central stalk subunits to proton translocation. Its function is as follows. This protein is part of the stalk that links CF(0) to CF(1). It either transmits conformational changes from CF(0) to CF(1) or is implicated in proton conduction. This is ATP synthase subunit delta from Ligilactobacillus salivarius (strain UCC118) (Lactobacillus salivarius).